Reading from the N-terminus, the 447-residue chain is Tubulin beta chain (447 aa).

The GTP site is built by Gln-11, Glu-69, Ser-138, Gly-142, Thr-143, Gly-144, Asn-204, and Asn-226. Glu-69 contacts Mg(2+).

The protein belongs to the tubulin family. As to quaternary structure, dimer of alpha and beta chains. A typical microtubule is a hollow water-filled tube with an outer diameter of 25 nm and an inner diameter of 15 nM. Alpha-beta heterodimers associate head-to-tail to form protofilaments running lengthwise along the microtubule wall with the beta-tubulin subunit facing the microtubule plus end conferring a structural polarity. Microtubules usually have 13 protofilaments but different protofilament numbers can be found in some organisms and specialized cells. Mg(2+) is required as a cofactor.

Its subcellular location is the cytoplasm. The protein resides in the cytoskeleton. Functionally, tubulin is the major constituent of microtubules, a cylinder consisting of laterally associated linear protofilaments composed of alpha- and beta-tubulin heterodimers. Microtubules grow by the addition of GTP-tubulin dimers to the microtubule end, where a stabilizing cap forms. Below the cap, tubulin dimers are in GDP-bound state, owing to GTPase activity of alpha-tubulin. This is Tubulin beta chain from Trichophyton rubrum (Athlete's foot fungus).